Reading from the N-terminus, the 242-residue chain is Venom nerve growth factor 1 (242 aa).

The signal sequence occupies residues 1 to 18; the sequence is MSMLCYTLIIAFLIGIWA. Residues 19-125 constitute a propeptide that is removed on maturation; sequence APKSEDNVPL…ALNRNIRSKR (107 aa). Residues 26-69 are disordered; the sequence is VPLGSPATSDLSDTSCAQTHKALKTSRNTDQRHPAPKKAEDQEL. Residues 31–43 are compositionally biased toward polar residues; sequence PATSDLSDTSCAQ. The span at 52-66 shows a compositional bias: basic and acidic residues; sequence RNTDQRHPAPKKAED. 3 disulfides stabilise this stretch: Cys139–Cys203, Cys181–Cys231, and Cys191–Cys233. Asn147 carries N-linked (GlcNAc...) asparagine glycosylation.

The protein belongs to the NGF-beta family. Homodimer; non-covalently linked. As to expression, expressed by the venom gland.

The protein resides in the secreted. In terms of biological role, nerve growth factor is important for the development and maintenance of the sympathetic and sensory nervous systems. It stimulates division and differentiation of sympathetic and embryonic sensory neurons as well as basal forebrain cholinergic neurons in the brain. Its relevance in the snake venom is not clear. However, it has been shown to inhibit metalloproteinase-dependent proteolysis of platelet glycoprotein Ib alpha, suggesting a metalloproteinase inhibition to prevent metalloprotease autodigestion and/or protection against prey proteases. Binds a lipid between the two protein chains in the homodimer. The lipid-bound form promotes histamine relase from mouse mast cells, contrary to the lipid-free form. This Demansia vestigiata (Lesser black whip snake) protein is Venom nerve growth factor 1.